A 120-amino-acid polypeptide reads, in one-letter code: UPF0344 protein lmo2265 (120 aa).

A run of 4 helical transmembrane segments spans residues 3–23, 33–53, 62–82, and 92–112; these read GYIH…ALLI, MLQM…IMMV, ILAI…EMLL, and GMFL…GFYL.

The protein belongs to the UPF0344 family.

Its subcellular location is the cell membrane. The protein is UPF0344 protein lmo2265 of Listeria monocytogenes serovar 1/2a (strain ATCC BAA-679 / EGD-e).